The sequence spans 142 residues: MAPGRRVERVAALIRRETSELLIHGIRDERVHQGMVSITNVEVSGDLQHCKIFVSIYGEEIQRSEVLEGLEAASGFLRGELGRRLQMRRAPEVHFHLDRGIEKGTSVLNLLEQLEQQRETLGEVQSESDQPTTDETTTVNKT.

The disordered stretch occupies residues 119-142 (ETLGEVQSESDQPTTDETTTVNKT). Residues 123 to 142 (EVQSESDQPTTDETTTVNKT) show a composition bias toward polar residues.

This sequence belongs to the RbfA family. In terms of assembly, monomer. Binds 30S ribosomal subunits, but not 50S ribosomal subunits or 70S ribosomes.

The protein resides in the cytoplasm. In terms of biological role, one of several proteins that assist in the late maturation steps of the functional core of the 30S ribosomal subunit. Associates with free 30S ribosomal subunits (but not with 30S subunits that are part of 70S ribosomes or polysomes). Required for efficient processing of 16S rRNA. May interact with the 5'-terminal helix region of 16S rRNA. In Prochlorococcus marinus (strain MIT 9303), this protein is Ribosome-binding factor A.